The following is a 214-amino-acid chain: Endothelin-3 (214 aa).

Positions 1 to 16 (MEPGLWLLLGLTVTSA) are cleaved as a signal peptide. The propeptide occupies 17–94 (AGLVPCPQSG…DKGLPAHHRP (78 aa)). The tract at residues 24–91 (QSGDSGRASV…KQEDKGLPAH (68 aa)) is disordered. Residues 25–35 (SGDSGRASVSQ) are compositionally biased toward polar residues. 2 disulfide bridges follow: C97-C111 and C99-C107. Residues 118–214 (INTPEQTVPY…MSRTDKAHRP (97 aa)) constitute a propeptide that is removed on maturation. An endothelin-like region spans residues 159–173 (CTCMGADDKACAHFC). The interval 183 to 214 (SGRAERPAAEEMRETGGPRQRLMSRTDKAHRP) is disordered. A compositionally biased stretch (basic and acidic residues) spans 185–198 (RAERPAAEEMRETG).

It belongs to the endothelin/sarafotoxin family.

Its subcellular location is the secreted. Functionally, endothelins are endothelium-derived vasoconstrictor peptides. The chain is Endothelin-3 (Edn3) from Mus musculus (Mouse).